Reading from the N-terminus, the 108-residue chain is Nucleoid-associated protein Mmwyl1_2533 (108 aa).

The interval Met-1–Lys-22 is disordered. Residues Arg-11–Lys-22 are compositionally biased toward polar residues.

The protein belongs to the YbaB/EbfC family. Homodimer.

It is found in the cytoplasm. The protein localises to the nucleoid. Binds to DNA and alters its conformation. May be involved in regulation of gene expression, nucleoid organization and DNA protection. This is Nucleoid-associated protein Mmwyl1_2533 from Marinomonas sp. (strain MWYL1).